Reading from the N-terminus, the 382-residue chain is Queuine tRNA-ribosyltransferase (382 aa).

D93 acts as the Proton acceptor in catalysis. Residues 93 to 97 (DSGGF), D147, Q191, and G218 contribute to the substrate site. The tract at residues 249-255 (GVGKPED) is RNA binding. The Nucleophile role is filled by D268. The RNA binding; important for wobble base 34 recognition stretch occupies residues 273 to 277 (TRNAR). Zn(2+) contacts are provided by C306, C308, C311, and H337.

This sequence belongs to the queuine tRNA-ribosyltransferase family. In terms of assembly, homodimer. Within each dimer, one monomer is responsible for RNA recognition and catalysis, while the other monomer binds to the replacement base PreQ1. It depends on Zn(2+) as a cofactor.

The enzyme catalyses 7-aminomethyl-7-carbaguanine + guanosine(34) in tRNA = 7-aminomethyl-7-carbaguanosine(34) in tRNA + guanine. It functions in the pathway tRNA modification; tRNA-queuosine biosynthesis. Functionally, catalyzes the base-exchange of a guanine (G) residue with the queuine precursor 7-aminomethyl-7-deazaguanine (PreQ1) at position 34 (anticodon wobble position) in tRNAs with GU(N) anticodons (tRNA-Asp, -Asn, -His and -Tyr). Catalysis occurs through a double-displacement mechanism. The nucleophile active site attacks the C1' of nucleotide 34 to detach the guanine base from the RNA, forming a covalent enzyme-RNA intermediate. The proton acceptor active site deprotonates the incoming PreQ1, allowing a nucleophilic attack on the C1' of the ribose to form the product. After dissociation, two additional enzymatic reactions on the tRNA convert PreQ1 to queuine (Q), resulting in the hypermodified nucleoside queuosine (7-(((4,5-cis-dihydroxy-2-cyclopenten-1-yl)amino)methyl)-7-deazaguanosine). The polypeptide is Queuine tRNA-ribosyltransferase (Haemophilus influenzae (strain ATCC 51907 / DSM 11121 / KW20 / Rd)).